We begin with the raw amino-acid sequence, 444 residues long: Dihydroorotate dehydrogenase (quinone), mitochondrial (444 aa).

The chain crosses the membrane as a helical span at residues 34 to 56; the sequence is GGASRYIIGTASVLVGAMAGFYI. FMN-binding positions include 124–128 and T148; that span reads AGLDK. K128 contacts substrate. 173 to 177 is a binding site for substrate; it reads NRYGF. FMN-binding residues include N220 and N250. Residue 250 to 255 participates in substrate binding; sequence NVSSPN. S253 (nucleophile) is an active-site residue. FMN is bound by residues K301 and S329. 330–331 serves as a coordination point for substrate; that stretch reads NT. FMN is bound by residues G355, G385, and 406–407; that span reads YT.

Belongs to the dihydroorotate dehydrogenase family. Type 2 subfamily. FMN is required as a cofactor.

It is found in the mitochondrion inner membrane. It carries out the reaction (S)-dihydroorotate + a quinone = orotate + a quinol. The protein operates within pyrimidine metabolism; UMP biosynthesis via de novo pathway; orotate from (S)-dihydroorotate (quinone route): step 1/1. Its function is as follows. Catalyzes the conversion of dihydroorotate to orotate with quinone as electron acceptor. This chain is Dihydroorotate dehydrogenase (quinone), mitochondrial (URA9), found in Eremothecium gossypii (strain ATCC 10895 / CBS 109.51 / FGSC 9923 / NRRL Y-1056) (Yeast).